A 521-amino-acid chain; its full sequence is Glucomannan 4-beta-mannosyltransferase 1 (521 aa).

The chain crosses the membrane as a helical span at residues 22-42; the sequence is VIVPLLRLAVAVCLTMSVLLF. Asp123 is a catalytic residue. Positions 182 and 184 each coordinate substrate. Asp276 is a catalytic residue. 4 consecutive transmembrane segments (helical) span residues 355-375, 391-411, 471-491, and 495-515; these read IIAH…TIFV, IITL…FFWI, VTEL…LAFG, and FFIY…GYVG.

This sequence belongs to the glycosyltransferase 2 family. Plant cellulose synthase-like A subfamily.

It is found in the golgi apparatus membrane. The enzyme catalyses GDP-mannose + (glucomannan)n = GDP + (glucomannan)n+1.. Functionally, possesses glucomannan synthase and mannan synthase activities in vitro. Mannan synthase consists of a 4-beta-mannosyltransferase activity on mannan using GDP-mannose. The beta-1,4-mannan product is the backbone for galactomannan synthesis by galactomannan galactosyltransferase. Galactomannan is a noncellulosic polysaccharides of plant cell wall. The sequence is that of Glucomannan 4-beta-mannosyltransferase 1 from Oryza sativa subsp. japonica (Rice).